The sequence spans 199 residues: MAFELPKLPYAFDALEPHFDKETMEIHHDRHHNTYVTKLNAAVEGTDLESKSIEEIVANLDSVPANIQTAVRNNGGGHLNHSLFWELLSPNSEEKGTVVEKIKEQWGSLEEFKKEFADKAAARFGSGWAWLVVNNGQLEIVTTPNQDNPLTEGKTPILGLDVWEHAYYLKYQNKRPDYIGAFWNVVNWEKVDELYNATK.

4 residues coordinate Fe(3+): histidine 27, histidine 81, aspartate 161, and histidine 165. Mn(2+) contacts are provided by histidine 27, histidine 81, aspartate 161, and histidine 165.

Belongs to the iron/manganese superoxide dismutase family. As to quaternary structure, homodimer. Can also form a heterodimer with SodM. It depends on Mn(2+) as a cofactor. Requires Fe(3+) as cofactor.

The catalysed reaction is 2 superoxide + 2 H(+) = H2O2 + O2. Its function is as follows. Destroys superoxide anion radicals which are normally produced within the cells and which are toxic to biological systems. Catalyzes the dismutation of superoxide anion radicals into O2 and H2O2 by successive reduction and oxidation of the transition metal ion at the active site. In Staphylococcus aureus (strain USA300), this protein is Superoxide dismutase [Mn/Fe] 1 (sodA).